Reading from the N-terminus, the 168-residue chain is MAENRRNDREQSEFEERVVSINRVTKVVKGGRRLRFAALVVVGDRNGRVGFGTGKAQEVPEAIRKAIEAAKKNLITVPMVGTTLPHEALGVFGGGKILLKPAVEGAGVAAGGAVRAVLELAGVADVTSKSLGSNTPINVVRATVDGLTQLKRAEEVAALRGKSVSDFA.

The S5 DRBM domain occupies 14 to 77; sequence FEERVVSINR…EAAKKNLITV (64 aa).

Belongs to the universal ribosomal protein uS5 family. Part of the 30S ribosomal subunit. Contacts proteins S4 and S8.

With S4 and S12 plays an important role in translational accuracy. Its function is as follows. Located at the back of the 30S subunit body where it stabilizes the conformation of the head with respect to the body. In Lactococcus lactis subsp. cremoris (strain MG1363), this protein is Small ribosomal subunit protein uS5.